Consider the following 539-residue polypeptide: Chaperonin GroEL (539 aa).

ATP is bound by residues 29–32 (TLGP), 86–90 (DGTTT), Gly-413, 479–481 (DAL), and Asp-495.

Belongs to the chaperonin (HSP60) family. Forms a cylinder of 14 subunits composed of two heptameric rings stacked back-to-back. Interacts with the co-chaperonin GroES.

Its subcellular location is the cytoplasm. It carries out the reaction ATP + H2O + a folded polypeptide = ADP + phosphate + an unfolded polypeptide.. Together with its co-chaperonin GroES, plays an essential role in assisting protein folding. The GroEL-GroES system forms a nano-cage that allows encapsulation of the non-native substrate proteins and provides a physical environment optimized to promote and accelerate protein folding. The protein is Chaperonin GroEL of Pseudothermotoga lettingae (strain ATCC BAA-301 / DSM 14385 / NBRC 107922 / TMO) (Thermotoga lettingae).